Consider the following 344-residue polypeptide: Anthranilate phosphoribosyltransferase (344 aa).

Residues glycine 85, 88–89 (GD), threonine 93, 95–98 (NIST), 113–121 (KHGGRSVSS), and serine 125 contribute to the 5-phospho-alpha-D-ribose 1-diphosphate site. Glycine 85 is an anthranilate binding site. Residue serine 97 participates in Mg(2+) binding. Position 171 (arginine 171) interacts with anthranilate. Aspartate 230 and glutamate 231 together coordinate Mg(2+).

The protein belongs to the anthranilate phosphoribosyltransferase family. In terms of assembly, homodimer. Mg(2+) is required as a cofactor.

It catalyses the reaction N-(5-phospho-beta-D-ribosyl)anthranilate + diphosphate = 5-phospho-alpha-D-ribose 1-diphosphate + anthranilate. It functions in the pathway amino-acid biosynthesis; L-tryptophan biosynthesis; L-tryptophan from chorismate: step 2/5. Its function is as follows. Catalyzes the transfer of the phosphoribosyl group of 5-phosphorylribose-1-pyrophosphate (PRPP) to anthranilate to yield N-(5'-phosphoribosyl)-anthranilate (PRA). The chain is Anthranilate phosphoribosyltransferase from Delftia acidovorans (strain DSM 14801 / SPH-1).